Reading from the N-terminus, the 156-residue chain is Small ribosomal subunit protein uS7 (156 aa).

The protein belongs to the universal ribosomal protein uS7 family. Part of the 30S ribosomal subunit. Contacts proteins S9 and S11.

Its function is as follows. One of the primary rRNA binding proteins, it binds directly to 16S rRNA where it nucleates assembly of the head domain of the 30S subunit. Is located at the subunit interface close to the decoding center, probably blocks exit of the E-site tRNA. The chain is Small ribosomal subunit protein uS7 from Solibacter usitatus (strain Ellin6076).